Reading from the N-terminus, the 303-residue chain is Quinolinate synthase (303 aa).

2 residues coordinate iminosuccinate: His25 and Ser42. Cys87 lines the [4Fe-4S] cluster pocket. Residues 113–115 (YVN) and Ser130 each bind iminosuccinate. A [4Fe-4S] cluster-binding site is contributed by Cys174. Iminosuccinate contacts are provided by residues 200–202 (HPE) and Thr217. Cys260 lines the [4Fe-4S] cluster pocket.

The protein belongs to the quinolinate synthase family. Type 2 subfamily. In terms of assembly, homodimer. The cofactor is [4Fe-4S] cluster.

Its subcellular location is the cytoplasm. The catalysed reaction is iminosuccinate + dihydroxyacetone phosphate = quinolinate + phosphate + 2 H2O + H(+). It participates in cofactor biosynthesis; NAD(+) biosynthesis; quinolinate from iminoaspartate: step 1/1. Catalyzes the condensation of iminoaspartate with dihydroxyacetone phosphate to form quinolinate. The chain is Quinolinate synthase from Pyrococcus furiosus (strain ATCC 43587 / DSM 3638 / JCM 8422 / Vc1).